The sequence spans 363 residues: Molybdenum import ATP-binding protein ModC (363 aa).

In terms of domain architecture, ABC transporter spans 1-230 (MISARFSGRQ…PNLPLIHRPD (230 aa)). 31–38 (GPSGCGKT) contributes to the ATP binding site. Residues 289-359 (DTTILNALPA…LKAMALSAPA (71 aa)) form the Mop domain.

Belongs to the ABC transporter superfamily. Molybdate importer (TC 3.A.1.8) family. As to quaternary structure, the complex is composed of two ATP-binding proteins (ModC), two transmembrane proteins (ModB) and a solute-binding protein (ModA).

The protein localises to the cell inner membrane. The enzyme catalyses molybdate(out) + ATP + H2O = molybdate(in) + ADP + phosphate + H(+). Functionally, part of the ABC transporter complex ModABC involved in molybdenum import. Responsible for energy coupling to the transport system. This is Molybdenum import ATP-binding protein ModC from Rhodobacter capsulatus (Rhodopseudomonas capsulata).